The following is a 280-amino-acid chain: Eukaryotic translation initiation factor 3 subunit F-1 (280 aa).

Residues 8-138 enclose the MPN domain; the sequence is VRVHPVVLFQ…LRAYICIQLG (131 aa).

It belongs to the eIF-3 subunit F family. As to quaternary structure, component of the eukaryotic translation initiation factor 3 (eIF-3) complex. The eIF-3 complex interacts with pix.

The protein resides in the cytoplasm. Its function is as follows. Component of the eukaryotic translation initiation factor 3 (eIF-3) complex, which is involved in protein synthesis of a specialized repertoire of mRNAs and, together with other initiation factors, stimulates binding of mRNA and methionyl-tRNAi to the 40S ribosome. The eIF-3 complex specifically targets and initiates translation of a subset of mRNAs involved in cell proliferation. The sequence is that of Eukaryotic translation initiation factor 3 subunit F-1 from Drosophila mojavensis (Fruit fly).